The primary structure comprises 269 residues: Enoyl-[acyl-carrier-protein] reductase [NADH] (269 aa).

NAD(+) contacts are provided by residues 20–21, 64–65, and 95–96; these read SI, DV, and IG. Tyr-158 is a binding site for substrate. NAD(+)-binding residues include Lys-165 and Ile-194. Thr-266 is subject to Phosphothreonine.

Belongs to the short-chain dehydrogenases/reductases (SDR) family. FabI subfamily. Homodimer. Homotetramer. Post-translationally, is phosphorylated in vivo. Phosphorylation on Thr-266 decreases enzymatic activity.

It localises to the secreted. The protein resides in the cell wall. The catalysed reaction is a 2,3-saturated acyl-[ACP] + NAD(+) = a (2E)-enoyl-[ACP] + NADH + H(+). It catalyses the reaction a 2,3-saturated acyl-CoA + NAD(+) = a (2E)-enoyl-CoA + NADH + H(+). The enzyme catalyses (2E)-octenoyl-CoA + NADH + H(+) = octanoyl-CoA + NAD(+). It carries out the reaction (2E)-dodecenoyl-CoA + NADH + H(+) = dodecanoyl-CoA + NAD(+). It participates in lipid metabolism; mycolic acid biosynthesis. With respect to regulation, inhA activity is controlled via phosphorylation: phosphorylation on Thr-266 decreases InhA activity and likely negatively regulates biosynthesis of mycolic acids and growth of the bacterium. InhA activity is likely inhibited by activated isoniazid, hexadecynoyl-CoA and octadecynoyl-CoA, which also block the biosynthesis of mycolic acids. The antitubercular pro-drug isoniazid (INH) is oxidatively activated by the catalase-peroxidase KatG and then covalently binds NAD to form an adduct that inhibits the activity of InhA. The inhibitory adduct is the isonicotinic-acyl-NADH where the isonicotinic-acyl group replaces the 4S (and not the 4R) hydrogen of NADH. Similarly, the antitubercular pro-drugs ethionamide (ETH) and prothionamide (PTH) are activated by the flavoprotein monooxygenase EthA, and forms an adduct with NAD (ETH-NAD and PTH-NAD, respectively) that is a tight-binding inhibitor of InhA. Its function is as follows. Enoyl-ACP reductase of the type II fatty acid syntase (FAS-II) system, which is involved in the biosynthesis of mycolic acids, a major component of mycobacterial cell walls. Catalyzes the NADH-dependent reduction of the double bond of 2-trans-enoyl-[acyl-carrier protein], an essential step in the fatty acid elongation cycle of the FAS-II pathway. Shows preference for long-chain fatty acyl thioester substrates (&gt;C16), and can also use 2-trans-enoyl-CoAs as alternative substrates. The mycobacterial FAS-II system utilizes the products of the FAS-I system as primers to extend fatty acyl chain lengths up to C56, forming the meromycolate chain that serves as the precursor for final mycolic acids. In terms of biological role, is the primary target of the first-line antitubercular drug isoniazid (INH) and of the second-line drug ethionamide (ETH). Overexpressed inhA confers INH and ETH resistance to M.smegmatis. The mechanism of isoniazid action against InhA is covalent attachment of the activated form of the drug to the nicotinamide ring of NAD and binding of the INH-NAD adduct to the active site of InhA. Similarly, the ETH-NAD adduct binds InhA. This is Enoyl-[acyl-carrier-protein] reductase [NADH] from Mycolicibacterium smegmatis (strain ATCC 700084 / mc(2)155) (Mycobacterium smegmatis).